The primary structure comprises 87 residues: Asparagine--tRNA ligase, cytoplasmic (87 aa).

This sequence belongs to the class-II aminoacyl-tRNA synthetase family.

Its subcellular location is the cytoplasm. It catalyses the reaction tRNA(Asn) + L-asparagine + ATP = L-asparaginyl-tRNA(Asn) + AMP + diphosphate + H(+). This is Asparagine--tRNA ligase, cytoplasmic (DED81) from Saccharomyces paradoxus (Yeast).